Here is a 439-residue protein sequence, read N- to C-terminus: MSDALPATFDVIVHPARELRGELRAQPSKNYTTRYLLAAALAEGETRVVGVATSEDAEAMLRCLRDWGAGVELVGDDAVIRGFGARPQAGVTLNPGNAGAVARFLMGVAALTSGTTFVTDYPDSLGKRPQGDLLEALERLGAWVSSNDGRLPISVSGPVRGGTVEVSAERSSQYASALMFLGPLLPDGLELRLTGDIKSHAPLRQTLDTLSDFGVRATASDDLRRISIPGGQKYRPGRVLVPGDYPGSAAILTAAALLPGEVRLSNLREHDLQGEKEAVNVLREMGADIVREGDTLTVRGGRPLHAVTRDGDSFTDAVQALTAAAAFAEGDTTWENVATLRLKECDRISDTRAELERLGLRARETADSLSVTGSAHLAGGITADGHGDHRMIMLLTLLGLRADAPLRITGAHHIRKSYPQFFAHLEALGARFEYAEATA.

3-phosphoshikimate is bound by residues K29 and R34. K29 is a binding site for phosphoenolpyruvate. Positions 99 and 128 each coordinate phosphoenolpyruvate. 6 residues coordinate 3-phosphoshikimate: S171, S172, Q173, S199, D316, and K343. Q173 is a phosphoenolpyruvate binding site. The Proton acceptor role is filled by D316. Residues R347, R390, and K416 each contribute to the phosphoenolpyruvate site.

The protein belongs to the EPSP synthase family. In terms of assembly, monomer.

Its subcellular location is the cytoplasm. It catalyses the reaction 3-phosphoshikimate + phosphoenolpyruvate = 5-O-(1-carboxyvinyl)-3-phosphoshikimate + phosphate. Its pathway is metabolic intermediate biosynthesis; chorismate biosynthesis; chorismate from D-erythrose 4-phosphate and phosphoenolpyruvate: step 6/7. In terms of biological role, catalyzes the transfer of the enolpyruvyl moiety of phosphoenolpyruvate (PEP) to the 5-hydroxyl of shikimate-3-phosphate (S3P) to produce enolpyruvyl shikimate-3-phosphate and inorganic phosphate. The protein is 3-phosphoshikimate 1-carboxyvinyltransferase of Deinococcus radiodurans (strain ATCC 13939 / DSM 20539 / JCM 16871 / CCUG 27074 / LMG 4051 / NBRC 15346 / NCIMB 9279 / VKM B-1422 / R1).